Consider the following 819-residue polypeptide: Probable cadmium/zinc-transporting ATPase HMA1, chloroplastic (819 aa).

The N-terminal 17 residues, 1–17 (MEPATLTRSSSLTRFPY), are a transit peptide targeting the chloroplast. Residues 18-122 (RRGLSTLRLA…IGWVRLANYL (105 aa)) lie on the Stromal side of the membrane. Positions 66 to 79 (DHHHDHHHDDEQDH) are enriched in basic and acidic residues. The tract at residues 66-87 (DHHHDHHHDDEQDHHNHHHHHH) is disordered. The chain crosses the membrane as a helical span at residues 123–144 (REHLHLCCSAAAMFLAAAVCPY). At 145-153 (LAPEPYIKS) the chain is on the lumenal side. Residues 154-173 (LQNAFMIVGFPLVGVSASLD) traverse the membrane as a helical segment. The Stromal segment spans residues 174–180 (ALMDIAG). A helical transmembrane segment spans residues 181–201 (GKVNIHVLMALAAFASVFMGN). Residue Ala202 is a topological domain, lumenal. Residues 203–223 (LEGGLLLAMFNLAHIAEEFFT) traverse the membrane as a helical segment. The Stromal segment spans residues 224–361 (SRSMVDVKEL…KPKLQRWLDE (138 aa)). A helical membrane pass occupies residues 362–384 (FGENYSKVVVVLSLAIAFLGPFL). Topologically, residues 385–398 (FKWPFLSTAACRGS) are lumenal. Residues 399 to 416 (VYRALGLMVAASPCALAV) form a helical membrane-spanning segment. Residues 417–737 (APLAYATAIS…AKSRQTTSLV (321 aa)) are Stromal-facing. Catalysis depends on Asp453, which acts as the 4-aspartylphosphate intermediate. Positions 682 and 686 each coordinate Mg(2+). Residues 738–757 (KQNVALALTSIFLAALPSVL) form a helical membrane-spanning segment. Topologically, residues 758 to 762 (GFVPL) are lumenal. The helical transmembrane segment at 763 to 781 (WLTVLLHEGGTLLVCLNSV) threads the bilayer. Topologically, residues 782–819 (RGLNDPSWSWKQDIVHLINKLRSQEPTSSSSNSLSSAH) are stromal.

This sequence belongs to the cation transport ATPase (P-type) (TC 3.A.3) family. Type IB subfamily.

The protein resides in the plastid. Its subcellular location is the chloroplast inner membrane. The enzyme catalyses Zn(2+)(in) + ATP + H2O = Zn(2+)(out) + ADP + phosphate + H(+). It carries out the reaction Cd(2+)(in) + ATP + H2O = Cd(2+)(out) + ADP + phosphate + H(+). In terms of biological role, involved in cadmium/zinc transport. This is Probable cadmium/zinc-transporting ATPase HMA1, chloroplastic (HMA1) from Arabidopsis thaliana (Mouse-ear cress).